A 54-amino-acid chain; its full sequence is Soricidin (54 aa).

3 disulfide bridges follow: cysteine 2-cysteine 23, cysteine 6-cysteine 27, and cysteine 9-cysteine 41.

The protein belongs to the opioid neuropeptide precursor family. Member of a multiprotein complex. Salivary gland.

It is found in the secreted. In terms of biological role, paralytic toxin that immobilizes a mealworm for 7 days. Inhibits the transient receptor potential cation channel subfamily V member 6 (TRPV6). In Blarina brevicauda (Northern short-tailed shrew), this protein is Soricidin.